The chain runs to 1303 residues: Endoplasmic reticulum transmembrane helix translocase spfA (1303 aa).

2 helical membrane-spanning segments follow: residues 25-45 (LHAY…VYLS) and 57-77 (EWTF…WLMT). Positions 158 to 191 (KPPVKVFQQAQGLTSKEEIDRIQHHYGDNTFDIP) are A-domain; part 1. 2 helical membrane passes run 201–221 (EHAV…WMLD) and 223–243 (YWYY…TVVW). An A-domain; part 2 region spans residues 256–408 (NIKPYDVWVY…LVRTMIYSTE (153 aa)). N287 carries an N-linked (GlcNAc...) asparagine glycan. A helical transmembrane segment spans residues 415–435 (VEALLFILFLLIFAIAAAWYV). N474 is a glycosylation site (N-linked (GlcNAc...) asparagine). The P-domain; part 1 stretch occupies residues 484 to 513 (AIFCTEPFRIPFAGRVDVACFDKTGTLTGE). D505 acts as the 4-aspartylphosphate intermediate in catalysis. Residues D505 and T507 each coordinate Mg(2+). 505-507 (DKT) is an ATP binding site. The interval 515 to 721 (LVVDGIAGLT…FAGFLVLQCP (207 aa)) is N-domain. Residue N589 is glycosylated (N-linked (GlcNAc...) asparagine). ATP contacts are provided by F616 and R678. The segment at 724–883 (EDAIKAVRML…HVGVALLNGS (160 aa)) is P-domain; part 2. Residue N734 is glycosylated (N-linked (GlcNAc...) asparagine). ATP is bound by residues D746 and 862–866 (DGTND). D862 is a Mg(2+) binding site. An arm-like region spans residues 884 to 1019 (PEDLAKIAEH…ELDDSEPPTI (136 aa)). N-linked (GlcNAc...) asparagine glycosylation is present at N958. A P-domain; part 3 region spans residues 1020-1035 (KLGDASVAAPFTSKLA). The next 5 membrane-spanning stretches (helical) occupy residues 1060–1080 (ILAL…LDGI), 1082–1102 (FGDG…LSIS), 1122–1142 (VYII…LIYL), 1201–1221 (AMYW…TEFI), and 1239–1259 (VTLT…ENVL). Residues 1277–1303 (DQLQREMERKKQEELETQAEKERQRKV) form a disordered region.

The protein belongs to the cation transport ATPase (P-type) (TC 3.A.3) family. Type V subfamily. Requires Mg(2+) as cofactor.

The protein resides in the endoplasmic reticulum membrane. The catalysed reaction is [protein]-with a C-terminal TM segment(out) + ATP + H2O = [protein]-with a C-terminal TM segment(in) + ADP + phosphate + H(+). With respect to regulation, the ATPase activity is stimulated by phosphatidylinositol 4-phosphate (PI4P). Endoplasmic reticulum (ER) translocase required to remove mitochondrial transmembrane proteins mistargeted to the endoplasmic reticulum. Acts as a dislocase that mediates the ATP-dependent extraction of mislocalized mitochondrial transmembrane proteins from the endoplasmic reticulum membrane. Works in concert with the ER Ca(2+) pump srcA to support ER homeostasis. With srcA, also supports redox homeostasis and virulence. In Aspergillus fumigatus (strain ATCC MYA-4609 / CBS 101355 / FGSC A1100 / Af293) (Neosartorya fumigata), this protein is Endoplasmic reticulum transmembrane helix translocase spfA.